A 461-amino-acid polypeptide reads, in one-letter code: Bifunctional protein GlmU (461 aa).

Residues 1-236 (MNVLLQELFI…VFEIFGINNR (236 aa)) form a pyrophosphorylase region. UDP-N-acetyl-alpha-D-glucosamine is bound by residues lysine 27, glutamine 80, 85–86 (GT), 109–111 (YGD), glycine 146, glutamate 160, asparagine 175, and asparagine 234. A Mg(2+)-binding site is contributed by aspartate 111. Residue asparagine 234 coordinates Mg(2+). A linker region spans residues 237–257 (FQLMKLEKIYQIEQAKKLLLN). The N-acetyltransferase stretch occupies residues 258–461 (GVTLSDYNRF…SILRKENNSK (204 aa)). A UDP-N-acetyl-alpha-D-glucosamine-binding site is contributed by lysine 358. Histidine 370 serves as the catalytic Proton acceptor. Positions 373 and 384 each coordinate UDP-N-acetyl-alpha-D-glucosamine. Acetyl-CoA is bound by residues alanine 387, alanine 430, and arginine 447.

The protein in the N-terminal section; belongs to the N-acetylglucosamine-1-phosphate uridyltransferase family. It in the C-terminal section; belongs to the transferase hexapeptide repeat family. As to quaternary structure, homotrimer. It depends on Mg(2+) as a cofactor.

It is found in the cytoplasm. It catalyses the reaction alpha-D-glucosamine 1-phosphate + acetyl-CoA = N-acetyl-alpha-D-glucosamine 1-phosphate + CoA + H(+). The catalysed reaction is N-acetyl-alpha-D-glucosamine 1-phosphate + UTP + H(+) = UDP-N-acetyl-alpha-D-glucosamine + diphosphate. The protein operates within nucleotide-sugar biosynthesis; UDP-N-acetyl-alpha-D-glucosamine biosynthesis; N-acetyl-alpha-D-glucosamine 1-phosphate from alpha-D-glucosamine 6-phosphate (route II): step 2/2. It participates in nucleotide-sugar biosynthesis; UDP-N-acetyl-alpha-D-glucosamine biosynthesis; UDP-N-acetyl-alpha-D-glucosamine from N-acetyl-alpha-D-glucosamine 1-phosphate: step 1/1. Its pathway is bacterial outer membrane biogenesis; LPS lipid A biosynthesis. Its function is as follows. Catalyzes the last two sequential reactions in the de novo biosynthetic pathway for UDP-N-acetylglucosamine (UDP-GlcNAc). The C-terminal domain catalyzes the transfer of acetyl group from acetyl coenzyme A to glucosamine-1-phosphate (GlcN-1-P) to produce N-acetylglucosamine-1-phosphate (GlcNAc-1-P), which is converted into UDP-GlcNAc by the transfer of uridine 5-monophosphate (from uridine 5-triphosphate), a reaction catalyzed by the N-terminal domain. The sequence is that of Bifunctional protein GlmU from Wigglesworthia glossinidia brevipalpis.